The chain runs to 153 residues: Cytochrome c-554 (153 aa).

Positions 1-20 (MRPIPALALTFSLVAMPALA) are cleaved as a signal peptide. The residue at position 21 (glutamine 21) is a Pyrrolidone carboxylic acid. Heme c-binding residues include methionine 37, cysteine 142, cysteine 145, and histidine 146.

Post-translationally, binds 1 heme c group covalently per subunit.

It localises to the periplasm. Functionally, monoheme c-type cytochrome, that is particularly expressed when cells generate energy via aerobic respiration. This chain is Cytochrome c-554 (cycF), found in Cereibacter sphaeroides (strain ATCC 17023 / DSM 158 / JCM 6121 / CCUG 31486 / LMG 2827 / NBRC 12203 / NCIMB 8253 / ATH 2.4.1.) (Rhodobacter sphaeroides).